Reading from the N-terminus, the 329-residue chain is uncharacterized protein (329 aa).

9 helical membrane-spanning segments follow: residues 5–24, 34–56, 92–114, 124–146, 159–181, 196–218, 231–253, 263–285, and 306–328; these read NLLLLILLHIGAFLFPFLTV, IAVALALLAVVLMSEALSIYLIF, FGYIIIGFPAAGLMLCGAVLEWG, IIFFAFIVPLLQLCLFPLVVLFY, SANFSVFWAKLSIAGLVLVLLSL, TAHRTAFILAPLFNIFVGALQYL, FSIVLFASPLLSFALLLELLGAY, LIGVSVIFLAMFAATWVVLRLFG, and FWLFWVNAAIVGIGIFFVIRILT.

It localises to the cell membrane. This is an uncharacterized protein from Archaeoglobus fulgidus (strain ATCC 49558 / DSM 4304 / JCM 9628 / NBRC 100126 / VC-16).